The primary structure comprises 307 residues: OTU domain-containing protein 2 (307 aa).

2 disordered regions span residues glutamate 23 to valine 46 and serine 96 to aspartate 130. The span at glutamine 103–glutamine 114 shows a compositional bias: low complexity. The 141-residue stretch at leucine 167–serine 307 folds into the OTU domain.

The protein is OTU domain-containing protein 2 (OTU2) of Saccharomyces cerevisiae (strain ATCC 204508 / S288c) (Baker's yeast).